The sequence spans 131 residues: D-ribose pyranase (131 aa).

H20 serves as the catalytic Proton donor. Substrate-binding positions include D28, H98, and 120–122 (FSN).

Belongs to the RbsD / FucU family. RbsD subfamily. Homodecamer.

It is found in the cytoplasm. It catalyses the reaction beta-D-ribopyranose = beta-D-ribofuranose. It participates in carbohydrate metabolism; D-ribose degradation; D-ribose 5-phosphate from beta-D-ribopyranose: step 1/2. Functionally, catalyzes the interconversion of beta-pyran and beta-furan forms of D-ribose. The chain is D-ribose pyranase from Petrotoga mobilis (strain DSM 10674 / SJ95).